The primary structure comprises 614 residues: DNA ligase (614 aa).

NAD(+) contacts are provided by residues 29-33 and 73-74; these read DQDYD and SI. Catalysis depends on lysine 111, which acts as the N6-AMP-lysine intermediate. NAD(+) contacts are provided by arginine 127, glutamate 158, and lysine 270. Zn(2+) is bound by residues cysteine 358, cysteine 361, cysteine 374, and cysteine 380. Positions 538 to 614 constitute a BRCT domain; the sequence is TLTHELFDKK…MTETDYLSKI (77 aa).

It belongs to the NAD-dependent DNA ligase family. LigA subfamily. The cofactor is Mg(2+). It depends on Mn(2+) as a cofactor.

It carries out the reaction NAD(+) + (deoxyribonucleotide)n-3'-hydroxyl + 5'-phospho-(deoxyribonucleotide)m = (deoxyribonucleotide)n+m + AMP + beta-nicotinamide D-nucleotide.. Functionally, DNA ligase that catalyzes the formation of phosphodiester linkages between 5'-phosphoryl and 3'-hydroxyl groups in double-stranded DNA using NAD as a coenzyme and as the energy source for the reaction. It is essential for DNA replication and repair of damaged DNA. This is DNA ligase from Ruthia magnifica subsp. Calyptogena magnifica.